The chain runs to 238 residues: Gas vesicle protein F (238 aa).

It belongs to the gas vesicle GvpF/GvpL family. As to quaternary structure, binds GvpA.

The protein resides in the gas vesicle. Functionally, a minor component of the gas vesicle, may be involved in preventing GvpA aggregation during gas vesicle nucleation. Gas vesicles are hollow, gas filled proteinaceous nanostructures found in some microorganisms. It is not clear what function gas vesicles perform in soil bacteria. This is Gas vesicle protein F from Streptomyces sp. (strain CB03234).